The primary structure comprises 287 residues: 1-acyl-sn-glycerol-3-phosphate acyltransferase alpha (287 aa).

An N-terminal signal peptide occupies residues 1-26 (MELWPGAGTLLLLLFLLLLLLLPTLW). The Lumenal portion of the chain corresponds to 27 to 37 (FCSPSAKYFFK). The chain crosses the membrane as a helical span at residues 38–58 (MAFYNGWILFLAVLAIPVCAV). At 59–127 (RGRNVENMKI…PGRCVPIAKR (69 aa)) the chain is on the cytoplasmic side. An HXXXXD motif motif is present at residues 104-109 (HQSSLD). A helical membrane pass occupies residues 128-148 (ELLWAGSAGLACWLAGVIFID). At 149 to 287 (RKRTGDAISV…KPGGVGEAGL (139 aa)) the chain is on the lumenal side. An EGTR motif motif is present at residues 178–181 (EGTR).

The protein belongs to the 1-acyl-sn-glycerol-3-phosphate acyltransferase family.

The protein resides in the endoplasmic reticulum membrane. The enzyme catalyses a 1-acyl-sn-glycero-3-phosphate + an acyl-CoA = a 1,2-diacyl-sn-glycero-3-phosphate + CoA. It carries out the reaction 1-(9Z-octadecenoyl)-sn-glycero-3-phosphate + (9Z)-octadecenoyl-CoA = 1,2-di-(9Z-octadecenoyl)-sn-glycero-3-phosphate + CoA. The catalysed reaction is 1-(9Z-octadecenoyl)-sn-glycero-3-phosphate + hexadecanoyl-CoA = 1-(9Z)-octadecenoyl-2-hexadecanoyl-sn-glycero-3-phosphate + CoA. It catalyses the reaction heptadecanoyl-CoA + 1-(9Z-octadecenoyl)-sn-glycero-3-phosphate = 1-(9Z)-octadecenoyl-2-heptadecanoyl-sn-glycero-3-phosphate + CoA. The enzyme catalyses 1-(9Z-octadecenoyl)-sn-glycero-3-phosphate + octadecanoyl-CoA = 1-(9Z-octadecenoyl)-2-octadecanoyl-sn-glycero-3-phosphate + CoA. It carries out the reaction 1-(9Z-octadecenoyl)-sn-glycero-3-phosphate + (9Z,12Z)-octadecadienoyl-CoA = 1-(9Z)-octadecenoyl-2-(9Z,12Z)-octadecadienoyl-sn-glycero-3-phosphate + CoA. The catalysed reaction is 1-(9Z-octadecenoyl)-sn-glycero-3-phosphate + tetradecanoyl-CoA = 1-(9Z)-octadecenoyl-2-tetradecanoyl-sn-glycero-3-phosphate + CoA. It catalyses the reaction pentadecanoyl-CoA + 1-(9Z-octadecenoyl)-sn-glycero-3-phosphate = 1-(9Z)-octadecenoyl-2-pentadecanoyl-sn-glycero-3-phosphate + CoA. The enzyme catalyses 1-hexadecanoyl-sn-glycero-3-phosphate + (9Z)-octadecenoyl-CoA = 1-hexadecanoyl-2-(9Z-octadecenoyl)-sn-glycero-3-phosphate + CoA. It carries out the reaction 1-(9Z,12Z,15Z)-octadecatrienoyl-sn-glycero-3-phosphate + (9Z)-octadecenoyl-CoA = 1-(9Z,12Z,15Z)-octadecatrienoyl-2-(9Z)-octadecenoyl-sn-glycero-3-phosphate + CoA. The catalysed reaction is 1-(6Z,9Z,12Z-octadecatrienoyl)-sn-glycero-3-phosphate + (9Z)-octadecenoyl-CoA = (6Z,9Z,12Z)-octadecatrienoyl-2-(9Z)-octadecenoyl-sn-glycero-3-phosphate + CoA. It catalyses the reaction 1-eicosanoyl-sn-glycero-3-phosphate + (9Z)-octadecenoyl-CoA = 1-eicosanoyl-2-(9Z)-octadecenoyl-sn-glycero-3-phosphate + CoA. The enzyme catalyses 1-tetradecanoyl-sn-glycerol 3-phosphate + (9Z)-octadecenoyl-CoA = 1-tetradecanoyl-2-(9Z)-octadecenoyl-sn-glycero-3-phosphate + CoA. It carries out the reaction 1-(9Z-octadecenoyl)-sn-glycero-3-phosphate + (5Z,8Z,11Z,14Z)-eicosatetraenoyl-CoA = 1-(9Z)-octadecenoyl-2-(5Z,8Z,11Z,14Z)-eicosatetraenoyl-sn-glycero-3-phosphate + CoA. The catalysed reaction is 1-(9Z-octadecenoyl)-sn-glycero-3-phosphate + dodecanoyl-CoA = 1-(9Z)-octadecenoyl-2-dodecanoyl-sn-glycero-3-phosphate + CoA. It catalyses the reaction (6Z)-octadecenoyl-CoA + 1-(9Z-octadecenoyl)-sn-glycero-3-phosphate = 1-(9Z)-octadecenoyl-2-(6Z)-octadecenoyl-sn-glycero-3-phosphate + CoA. The enzyme catalyses (11Z)-octadecenoyl-CoA + 1-(9Z-octadecenoyl)-sn-glycero-3-phosphate = 1-(9Z)-octadecenoyl-2-(11Z)-octadecenoyl-sn-glycero-3-phosphate + CoA. It carries out the reaction (9Z)-hexadecenoyl-CoA + 1-(9Z-octadecenoyl)-sn-glycero-3-phosphate = 1-(9Z-octadecenoyl)-2-(9Z-hexadecenoyl)-sn-glycero-3-phosphate + CoA. The protein operates within phospholipid metabolism; CDP-diacylglycerol biosynthesis; CDP-diacylglycerol from sn-glycerol 3-phosphate: step 2/3. Converts 1-acyl-sn-glycerol-3-phosphate (lysophosphatidic acid or LPA) into 1,2-diacyl-sn-glycerol-3-phosphate (phosphatidic acid or PA) by incorporating an acyl moiety at the sn-2 position of the glycerol backbone. The chain is 1-acyl-sn-glycerol-3-phosphate acyltransferase alpha (AGPAT1) from Bos taurus (Bovine).